The primary structure comprises 172 residues: uncharacterized protein (172 aa).

The protein belongs to the flavoredoxin family. FMN serves as cofactor.

This is an uncharacterized protein from Pyrococcus abyssi (strain GE5 / Orsay).